We begin with the raw amino-acid sequence, 658 residues long: Probable replication factor A 73 kDa subunit (658 aa).

2 disordered regions span residues 134–155 (PEVK…RPNI) and 169–222 (SEFQ…TERG). Residues 236 to 326 (FRIHGMVSRK…TLRNDSVVEA (91 aa)) constitute a DNA-binding region (OB). The C4-type zinc finger occupies 518–539 (CASEGCQKKVIESDGEYRCEKC).

This sequence belongs to the replication factor A protein 1 family. Component of the heterotrimeric canonical replication protein A complex (RPA).

It is found in the nucleus. Its function is as follows. As part of the heterotrimeric replication protein A complex (RPA/RP-A), binds and stabilizes single-stranded DNA intermediates, that form during DNA replication or upon DNA stress. It prevents their reannealing and in parallel, recruits and activates different proteins and complexes involved in DNA metabolism. Thereby, it plays an essential role both in DNA replication and the cellular response to DNA damage. The sequence is that of Probable replication factor A 73 kDa subunit from Caenorhabditis briggsae.